Here is a 508-residue protein sequence, read N- to C-terminus: Cytochrome P450 monooxygenase tenA (508 aa).

The chain crosses the membrane as a helical span at residues 8–24 (VSLPYLILSACLSVILL). Cys-456 lines the heme pocket.

This sequence belongs to the cytochrome P450 family. It depends on heme as a cofactor.

It is found in the membrane. Its pathway is secondary metabolite biosynthesis. Functionally, cytochrome P450 monooxygenase; part of the gene cluster that mediates the biosynthesis of tenellin-type 2-pyridones, iron-chelating compounds involved in iron stress tolerance, competition with the natural competitor fungus Metarhizium robertsii and insect hosts infection. TenA catalyzes an oxidative ring expansion of pretenellin A and 14-hydropretellenin A to form the 2-pyridone core, leading to the production of pretenellin B and pyridovericin, respectively. The pathway begins with the assembly of the polyketide-amino acid backbone by the hybrid PKS-NRPS tenS with the help of the enoyl reductase tenC. These enzymes catalyze the synthesis of the pyrrolidine-2-dione intermediates pretellinin A, 11-hydropretellenin A, 12-hydropretellenin A, 13-hydropretellenin A, 14-hydropretellenin A, 12-oxopretellenin A and prototellinin D. The cytochrome P450 monooxygenase tenA then catalyzes an oxidative ring expansion of pretenellin A and 14-hydropretellenin A to form the 2-pyridone core, leading to pretenellin B and pyridovericin, respectively. The cytochrome P450 monooxygenase tenB is then required for the selective N-hydroxylation of the 2-pyridone nitrogen of yield tellinin and 15-hydroxytellenin (15-HT), respectively. The UDP-glucosyltransferase GT1 and the methyltransferase MT1, located outside the tenS gene cluster, contribute to the stepwise glycosylation and methylation of 15-HT to obtain the glycoside pyridovericin-N-O-(4-O-methyl-beta-D-glucopyranoside) (PMGP). Additional related compounds such as 1-O-methyl-15-HT, (8Z)-1-O-methyl-15-HT, and O-methyltenellin A are also produced but the enzymes involved in their biosynthesis have still to be determined. In Beauveria bassiana (White muscardine disease fungus), this protein is Cytochrome P450 monooxygenase tenA.